Consider the following 378-residue polypeptide: Queuine tRNA-ribosyltransferase (378 aa).

Residue Asp-89 is the Proton acceptor of the active site. Substrate is bound by residues 89–93 (DSGGF), Asp-143, Gln-187, and Gly-214. The tract at residues 245-251 (GVGKPED) is RNA binding. Asp-264 (nucleophile) is an active-site residue. Positions 269–273 (TRNAR) are RNA binding; important for wobble base 34 recognition. Zn(2+) contacts are provided by Cys-302, Cys-304, Cys-307, and His-333.

It belongs to the queuine tRNA-ribosyltransferase family. Homodimer. Within each dimer, one monomer is responsible for RNA recognition and catalysis, while the other monomer binds to the replacement base PreQ1. Requires Zn(2+) as cofactor.

It catalyses the reaction 7-aminomethyl-7-carbaguanine + guanosine(34) in tRNA = 7-aminomethyl-7-carbaguanosine(34) in tRNA + guanine. It participates in tRNA modification; tRNA-queuosine biosynthesis. Its function is as follows. Catalyzes the base-exchange of a guanine (G) residue with the queuine precursor 7-aminomethyl-7-deazaguanine (PreQ1) at position 34 (anticodon wobble position) in tRNAs with GU(N) anticodons (tRNA-Asp, -Asn, -His and -Tyr). Catalysis occurs through a double-displacement mechanism. The nucleophile active site attacks the C1' of nucleotide 34 to detach the guanine base from the RNA, forming a covalent enzyme-RNA intermediate. The proton acceptor active site deprotonates the incoming PreQ1, allowing a nucleophilic attack on the C1' of the ribose to form the product. After dissociation, two additional enzymatic reactions on the tRNA convert PreQ1 to queuine (Q), resulting in the hypermodified nucleoside queuosine (7-(((4,5-cis-dihydroxy-2-cyclopenten-1-yl)amino)methyl)-7-deazaguanosine). The protein is Queuine tRNA-ribosyltransferase of Yersinia enterocolitica serotype O:8 / biotype 1B (strain NCTC 13174 / 8081).